The chain runs to 887 residues: Alanine--tRNA ligase (887 aa).

Zn(2+) is bound by residues His-564, His-568, Cys-675, and His-679. A compositionally biased stretch (gly residues) spans 851-866; that stretch reads GQGGGGRPDMAQGGGP. Positions 851-871 are disordered; the sequence is GQGGGGRPDMAQGGGPDGDKA.

The protein belongs to the class-II aminoacyl-tRNA synthetase family. The cofactor is Zn(2+).

The protein localises to the cytoplasm. The catalysed reaction is tRNA(Ala) + L-alanine + ATP = L-alanyl-tRNA(Ala) + AMP + diphosphate. In terms of biological role, catalyzes the attachment of alanine to tRNA(Ala) in a two-step reaction: alanine is first activated by ATP to form Ala-AMP and then transferred to the acceptor end of tRNA(Ala). Also edits incorrectly charged Ser-tRNA(Ala) and Gly-tRNA(Ala) via its editing domain. This Rhizorhabdus wittichii (strain DSM 6014 / CCUG 31198 / JCM 15750 / NBRC 105917 / EY 4224 / RW1) (Sphingomonas wittichii) protein is Alanine--tRNA ligase.